A 402-amino-acid polypeptide reads, in one-letter code: Putative F-box protein At1g70970 (402 aa).

Residues S4–R52 form the F-box domain.

The polypeptide is Putative F-box protein At1g70970 (Arabidopsis thaliana (Mouse-ear cress)).